Here is a 300-residue protein sequence, read N- to C-terminus: 4-diphosphocytidyl-2-C-methyl-D-erythritol kinase (300 aa).

K12 is a catalytic residue. Residue 94–104 (PAQAGIGGGSS) participates in ATP binding. Residue D136 is part of the active site.

It belongs to the GHMP kinase family. IspE subfamily.

The catalysed reaction is 4-CDP-2-C-methyl-D-erythritol + ATP = 4-CDP-2-C-methyl-D-erythritol 2-phosphate + ADP + H(+). The protein operates within isoprenoid biosynthesis; isopentenyl diphosphate biosynthesis via DXP pathway; isopentenyl diphosphate from 1-deoxy-D-xylulose 5-phosphate: step 3/6. Its function is as follows. Catalyzes the phosphorylation of the position 2 hydroxy group of 4-diphosphocytidyl-2C-methyl-D-erythritol. The sequence is that of 4-diphosphocytidyl-2-C-methyl-D-erythritol kinase from Verminephrobacter eiseniae (strain EF01-2).